A 556-amino-acid chain; its full sequence is Formate--tetrahydrofolate ligase (556 aa).

65 to 72 (TPAGEGKS) lines the ATP pocket.

It belongs to the formate--tetrahydrofolate ligase family.

The catalysed reaction is (6S)-5,6,7,8-tetrahydrofolate + formate + ATP = (6R)-10-formyltetrahydrofolate + ADP + phosphate. Its pathway is one-carbon metabolism; tetrahydrofolate interconversion. The protein is Formate--tetrahydrofolate ligase of Streptococcus pneumoniae (strain Taiwan19F-14).